The primary structure comprises 254 residues: MKTPARRSKRVNQEESETNVTTRVVLRTRKTNCSKTRAARVRPDYPLTRTTSESEMKLMPPEFFQIDALDLAPRLLGKFMRRDNVVLRITEVEAYRPNDSACHGRFGVTPRTAPVFGPGGHAYVYLCYGLHMMLNIVADKEGVGAAVLIRSCSPVSGMETIQERRGLKTDKPVLLNGPGKVGQALGLSTEWSHHPLYSPGGLELLDGGEDVEKVMVGPRVGIDYALPEHVNALWRFAVADTPWISAPKNTLKPL.

Basic residues predominate over residues 1-10; that stretch reads MKTPARRSKR. The segment at 1–20 is disordered; it reads MKTPARRSKRVNQEESETNV.

This sequence belongs to the DNA glycosylase MPG family.

It localises to the nucleus. It carries out the reaction Hydrolysis of alkylated DNA, releasing 3-methyladenine, 3-methylguanine, 7-methylguanine and 7-methyladenine.. Hydrolysis of the deoxyribose N-glycosidic bond to excise 3-methyladenine, and 7-methylguanine from the damaged DNA polymer formed by alkylation lesions. The chain is DNA-3-methyladenine glycosylase (MAG) from Arabidopsis thaliana (Mouse-ear cress).